The sequence spans 157 residues: S-ribosylhomocysteine lyase (157 aa).

Fe cation contacts are provided by histidine 53, histidine 57, and cysteine 124.

This sequence belongs to the LuxS family. In terms of assembly, homodimer. The cofactor is Fe cation.

The catalysed reaction is S-(5-deoxy-D-ribos-5-yl)-L-homocysteine = (S)-4,5-dihydroxypentane-2,3-dione + L-homocysteine. Its function is as follows. Involved in the synthesis of autoinducer 2 (AI-2) which is secreted by bacteria and is used to communicate both the cell density and the metabolic potential of the environment. The regulation of gene expression in response to changes in cell density is called quorum sensing. Catalyzes the transformation of S-ribosylhomocysteine (RHC) to homocysteine (HC) and 4,5-dihydroxy-2,3-pentadione (DPD). The chain is S-ribosylhomocysteine lyase from Borrelia garinii subsp. bavariensis (strain ATCC BAA-2496 / DSM 23469 / PBi) (Borreliella bavariensis).